Consider the following 231-residue polypeptide: Large ribosomal subunit protein uL1 (231 aa).

This sequence belongs to the universal ribosomal protein uL1 family. Part of the 50S ribosomal subunit.

Its function is as follows. Binds directly to 23S rRNA. The L1 stalk is quite mobile in the ribosome, and is involved in E site tRNA release. In terms of biological role, protein L1 is also a translational repressor protein, it controls the translation of the L11 operon by binding to its mRNA. The chain is Large ribosomal subunit protein uL1 from Alcanivorax borkumensis (strain ATCC 700651 / DSM 11573 / NCIMB 13689 / SK2).